Consider the following 506-residue polypeptide: Kynurenine 3-monooxygenase (506 aa).

The segment at 153 to 174 (QETSLLPGEESEKDKKQNTEDE) is disordered. Positions 162–171 (ESEKDKKQNT) are enriched in basic and acidic residues.

It belongs to the aromatic-ring hydroxylase family. KMO subfamily. FAD serves as cofactor.

The protein localises to the mitochondrion outer membrane. The enzyme catalyses L-kynurenine + NADPH + O2 + H(+) = 3-hydroxy-L-kynurenine + NADP(+) + H2O. It participates in cofactor biosynthesis; NAD(+) biosynthesis; quinolinate from L-kynurenine: step 1/3. Its function is as follows. Catalyzes the hydroxylation of L-kynurenine (L-Kyn) to form 3-hydroxy-L-kynurenine (L-3OHKyn). Required for synthesis of quinolinic acid. The chain is Kynurenine 3-monooxygenase from Cryptococcus neoformans var. neoformans serotype D (strain JEC21 / ATCC MYA-565) (Filobasidiella neoformans).